The following is a 494-amino-acid chain: Probable cytosol aminopeptidase (494 aa).

Residues lysine 260 and aspartate 265 each contribute to the Mn(2+) site. Residue lysine 272 is part of the active site. Residues aspartate 283, aspartate 342, and glutamate 344 each contribute to the Mn(2+) site. Arginine 346 is a catalytic residue.

Belongs to the peptidase M17 family. Requires Mn(2+) as cofactor.

It is found in the cytoplasm. It carries out the reaction Release of an N-terminal amino acid, Xaa-|-Yaa-, in which Xaa is preferably Leu, but may be other amino acids including Pro although not Arg or Lys, and Yaa may be Pro. Amino acid amides and methyl esters are also readily hydrolyzed, but rates on arylamides are exceedingly low.. The enzyme catalyses Release of an N-terminal amino acid, preferentially leucine, but not glutamic or aspartic acids.. Its function is as follows. Presumably involved in the processing and regular turnover of intracellular proteins. Catalyzes the removal of unsubstituted N-terminal amino acids from various peptides. The polypeptide is Probable cytosol aminopeptidase (Bacillus anthracis (strain CDC 684 / NRRL 3495)).